The chain runs to 102 residues: Small ribosomal subunit protein uS10 (102 aa).

Belongs to the universal ribosomal protein uS10 family. Part of the 30S ribosomal subunit.

Functionally, involved in the binding of tRNA to the ribosomes. The polypeptide is Small ribosomal subunit protein uS10 (Nitrosomonas eutropha (strain DSM 101675 / C91 / Nm57)).